The chain runs to 500 residues: Cytochrome P450 monooxygenase acrD (500 aa).

Residues 13 to 32 (PYLSGTNLVWTLLLVGYIIP) traverse the membrane as a helical segment. Residues asparagine 210 and asparagine 414 are each glycosylated (N-linked (GlcNAc...) asparagine). A heme-binding site is contributed by cysteine 447.

Belongs to the cytochrome P450 family. Requires heme as cofactor.

The protein localises to the membrane. The protein operates within secondary metabolite biosynthesis. Its function is as follows. Cytochrome P450 monooxygenase; part of the cluster that mediates the biosynthesis of acurin A, a highly reduced polyketide coupled to a serine via a peptide bond. The activities of the highly reducing polyketide synthase acrA and the nonribosomal peptide synthetase acrB are collectively responsible for the synthesis of the acurin A core structure with a heptaketide backbone produced by acrA covalently fused to a L-serine by acrB. After the formation of the PK-NRP hybrid product, it is detached from acrB by reductive release to set up the formation of the lactam ring by aldol condensation. The hydrolyase acrC then catalyzes water loss to generate a double bond in the ring. This double bond is probably reduced, which is followed by three oxidations at C-22 to generate the carboxylic acid moiety, involving probably the FAD-binding monooxygenase acrE and the cytochrome P450 monooxygenases acrD and acrF. Finally, a last methylation step performed by the O-methyltransferase acrG leads to the production of acurin A. The protein is Cytochrome P450 monooxygenase acrD of Aspergillus aculeatus (strain ATCC 16872 / CBS 172.66 / WB 5094).